A 431-amino-acid chain; its full sequence is Methionine aminopeptidase 2-2 (431 aa).

Residues 1-76 (MAAQASEKLQ…PPRVPLSTLF (76 aa)) are disordered. Residues 35 to 47 (EAEDDSDDDEVED) show a composition bias toward acidic residues. Residue His-184 coordinates substrate. Positions 204, 215, and 284 each coordinate a divalent metal cation. His-292 is a substrate binding site. A divalent metal cation contacts are provided by Glu-317 and Glu-412.

The protein belongs to the peptidase M24A family. Methionine aminopeptidase eukaryotic type 2 subfamily. Requires Co(2+) as cofactor. It depends on Zn(2+) as a cofactor. The cofactor is Mn(2+). Fe(2+) serves as cofactor.

The protein localises to the cytoplasm. The catalysed reaction is Release of N-terminal amino acids, preferentially methionine, from peptides and arylamides.. In terms of biological role, cotranslationally removes the N-terminal methionine from nascent proteins. The N-terminal methionine is often cleaved when the second residue in the primary sequence is small and uncharged (Met-Ala-, Cys, Gly, Pro, Ser, Thr, or Val). This Aspergillus niger (strain ATCC MYA-4892 / CBS 513.88 / FGSC A1513) protein is Methionine aminopeptidase 2-2.